The following is a 192-amino-acid chain: tRNA (pseudouridine(54)-N(1))-methyltransferase (192 aa).

2 residues coordinate S-adenosyl-L-methionine: leucine 114 and glycine 138.

It belongs to the methyltransferase superfamily. TrmY family. Homodimer.

The protein resides in the cytoplasm. It catalyses the reaction pseudouridine(54) in tRNA + S-adenosyl-L-methionine = N(1)-methylpseudouridine(54) in tRNA + S-adenosyl-L-homocysteine + H(+). In terms of biological role, specifically catalyzes the N1-methylation of pseudouridine at position 54 (Psi54) in tRNAs. The chain is tRNA (pseudouridine(54)-N(1))-methyltransferase from Aeropyrum pernix (strain ATCC 700893 / DSM 11879 / JCM 9820 / NBRC 100138 / K1).